The following is a 258-amino-acid chain: uncharacterized protein (258 aa).

6 helical membrane passes run 21–41 (LIWL…TIYY), 73–93 (LSQF…GSVA), 119–139 (WLIQ…LAYY), 153–173 (FAAS…AGLA), 182–202 (GAAA…VSLF), and 229–249 (FFGW…VFSV).

Its subcellular location is the cell membrane. This is an uncharacterized protein from Bacillus subtilis (strain 168).